The sequence spans 59 residues: Large ribosomal subunit protein uL30 (59 aa).

The protein belongs to the universal ribosomal protein uL30 family. As to quaternary structure, part of the 50S ribosomal subunit.

The chain is Large ribosomal subunit protein uL30 from Pelotomaculum thermopropionicum (strain DSM 13744 / JCM 10971 / SI).